We begin with the raw amino-acid sequence, 342 residues long: Glycerol-3-phosphate dehydrogenase [NAD(P)+] (342 aa).

Residues W11, R33, and K112 each coordinate NADPH. Positions 112, 147, and 149 each coordinate sn-glycerol 3-phosphate. A151 serves as a coordination point for NADPH. K202, D255, S265, R266, and N267 together coordinate sn-glycerol 3-phosphate. The active-site Proton acceptor is K202. R266 contacts NADPH. V290 and E292 together coordinate NADPH.

Belongs to the NAD-dependent glycerol-3-phosphate dehydrogenase family.

The protein resides in the cytoplasm. It carries out the reaction sn-glycerol 3-phosphate + NAD(+) = dihydroxyacetone phosphate + NADH + H(+). The enzyme catalyses sn-glycerol 3-phosphate + NADP(+) = dihydroxyacetone phosphate + NADPH + H(+). It participates in membrane lipid metabolism; glycerophospholipid metabolism. In terms of biological role, catalyzes the reduction of the glycolytic intermediate dihydroxyacetone phosphate (DHAP) to sn-glycerol 3-phosphate (G3P), the key precursor for phospholipid synthesis. The sequence is that of Glycerol-3-phosphate dehydrogenase [NAD(P)+] from Cupriavidus metallidurans (strain ATCC 43123 / DSM 2839 / NBRC 102507 / CH34) (Ralstonia metallidurans).